We begin with the raw amino-acid sequence, 229 residues long: MIRSVLASVSPLRQILASQLCTSSITLAGIRPLGPKNKAPDFSGTAVVNGDFKTISMKDYKGKWLILFFYPLDFTFVCPTEITAFSDRCAEFQKLNTELIACSCDSHFSHLAWIQTPRSEVGGLGDMKIPVLADFNKDIANAFGVLDHETGISYRGLFLIDPSGEIRHSLVNDLSVGRSVDEAFRTLKAFQFVEKHGEVCPANWSDDKPTIKPGIKESKEYFKKVDGHT.

The region spanning 33–192 (LGPKNKAPDF…AFRTLKAFQF (160 aa)) is the Thioredoxin domain. The active-site Cysteine sulfenic acid (-SOH) intermediate is the C78.

This sequence belongs to the peroxiredoxin family. AhpC/Prx1 subfamily. As to quaternary structure, homodimer; disulfide-linked, upon oxidation.

It catalyses the reaction a hydroperoxide + [thioredoxin]-dithiol = an alcohol + [thioredoxin]-disulfide + H2O. Its function is as follows. Thiol-specific peroxidase that catalyzes the reduction of hydrogen peroxide and organic hydroperoxides to water and alcohols, respectively. Plays a role in cell protection against oxidative stress by detoxifying peroxides and as sensor of hydrogen peroxide-mediated signaling events. The sequence is that of Peroxiredoxin 1 (TSA1) from Brugia malayi (Filarial nematode worm).